Consider the following 81-residue polypeptide: 2,3-bisphosphoglycerate-independent phosphoglycerate mutase (81 aa).

Residue Ser-14 is the Phosphoserine intermediate of the active site. Ser-14 contacts Mn(2+). His-75 contributes to the substrate binding site.

This sequence belongs to the BPG-independent phosphoglycerate mutase family. As to quaternary structure, monomer. It depends on Mn(2+) as a cofactor.

The enzyme catalyses (2R)-2-phosphoglycerate = (2R)-3-phosphoglycerate. It functions in the pathway carbohydrate degradation; glycolysis; pyruvate from D-glyceraldehyde 3-phosphate: step 3/5. Its function is as follows. Catalyzes the interconversion of 2-phosphoglycerate and 3-phosphoglycerate. This Tomato big bud phytoplasma protein is 2,3-bisphosphoglycerate-independent phosphoglycerate mutase (gpmI).